Consider the following 157-residue polypeptide: Cell cycle control protein 50C (157 aa).

The Cytoplasmic segment spans residues 1–34; it reads MEERAQHCLSRLLDNSALKQQELPIHRLYFTARR. The helical transmembrane segment at 35–55 threads the bilayer; that stretch reads VLFVFFATGIFCLCMGIILIL. Residues 56 to 157 lie on the Extracellular side of the membrane; it reads SARSTQEIEI…LFLNQVDFSV (102 aa). N-linked (GlcNAc...) asparagine glycosylation occurs at Asn-66.

It belongs to the CDC50/LEM3 family.

The protein resides in the membrane. This is Cell cycle control protein 50C (TMEM30C) from Pan troglodytes (Chimpanzee).